Here is a 249-residue protein sequence, read N- to C-terminus: MGVAFDKCDTRPAHIDAILNGLDRYNPETTTVFQDYVAQQCEDRTFDCYANLALLKLYQFNPHLLQAETATNILAKALTVFPSPAFSLCLALLPAHTQPFPTADADASQTSDFVESVQKLARLSTLLESAQYAQFWSTLNSDDLYADLVADVAGFEELVRIRIAVEVGKAFREINAEVLEQWFDLRSREALEKFVTEVCGWEVDKAGPNGTVVKVPSNKENEVRSEVKSEHVGVEMFGRVIRRGFEQAA.

A PCI domain is found at 46–222 (FDCYANLALL…VKVPSNKENE (177 aa)).

The protein belongs to the eIF-3 subunit K family. As to quaternary structure, component of the eukaryotic translation initiation factor 3 (eIF-3) complex.

It is found in the cytoplasm. Component of the eukaryotic translation initiation factor 3 (eIF-3) complex, which is involved in protein synthesis of a specialized repertoire of mRNAs and, together with other initiation factors, stimulates binding of mRNA and methionyl-tRNAi to the 40S ribosome. The eIF-3 complex specifically targets and initiates translation of a subset of mRNAs involved in cell proliferation. This is Eukaryotic translation initiation factor 3 subunit K from Aspergillus clavatus (strain ATCC 1007 / CBS 513.65 / DSM 816 / NCTC 3887 / NRRL 1 / QM 1276 / 107).